A 449-amino-acid polypeptide reads, in one-letter code: MGHLVSAVETAKLLLSRCHSLSITVLIFNNSVVTSKVHNYVDSQIASSSNRLRFIYLPRDETGISSFSSLIEKQKPHVKESVMKITEFGSSVESPRLVGFIVDMFCTAMIDVANEFGVPSYIFYTSGAAFLNFMLHVQKIHDEENFNPTEFNASDGELQVPGLVNSFPSKAMPTAILSKQWFPPLLENTRRYGEAKGVIINTFFELESHAIESFKDPPIYPVGPILDVRSNGRNTNQEIMQWLDDQPPSSVVFLCFGSNGSFSKDQVKEIACALEDSGHRFLWSLADHRAPGFLESPSDYEDLQEVLPEGFLERTSGIEKVIGWAPQVAVLAHPATGGLVSHSGWNSILESIWFGVPVATWPMYAEQQFNAFQMVIELGLAVEIKMDYRNDSGEIVKCDQIERGIRCLMKHDSDRRKKVKEMSEKSRGALMEGGSSYCWLDNLIKDMIK.

His3 functions as the Proton acceptor in the catalytic mechanism. Residue His3 participates in an anthocyanidin binding. The Charge relay role is filled by Asp103. UDP-alpha-D-glucose contacts are provided by Thr125, Ala325, Gln327, His342, Trp345, Asn346, Ser347, and Glu350. An an anthocyanidin-binding site is contributed by Ala365. The UDP-alpha-D-glucose site is built by Glu366 and Gln367.

This sequence belongs to the UDP-glycosyltransferase family. In terms of tissue distribution, expressed in cotyledons and roots, but not in leaves.

It carries out the reaction an anthocyanidin + UDP-alpha-D-glucose + H(+) = an anthocyanidin 3-O-beta-D-glucoside + UDP. It functions in the pathway pigment biosynthesis; anthocyanin biosynthesis. In the presence of other necessary color factors, this glycosylation reaction allows the accumulation of anthocyanin pigments. The sequence is that of Anthocyanidin 3-O-glucosyltransferase 1 (GT1) from Manihot esculenta (Cassava).